A 155-amino-acid polypeptide reads, in one-letter code: uncharacterized protein (155 aa).

The helical transmembrane segment at 5 to 25 threads the bilayer; that stretch reads GIIICVGIAFLIFIFLWAYFK.

Its subcellular location is the membrane. This is an uncharacterized protein from Acheta domesticus (House cricket).